A 249-amino-acid polypeptide reads, in one-letter code: Ubiquinone biosynthesis O-methyltransferase (249 aa).

S-adenosyl-L-methionine-binding residues include Arg41, Gly72, Asp93, and Met136.

This sequence belongs to the methyltransferase superfamily. UbiG/COQ3 family.

It carries out the reaction a 3-demethylubiquinol + S-adenosyl-L-methionine = a ubiquinol + S-adenosyl-L-homocysteine + H(+). The enzyme catalyses a 3-(all-trans-polyprenyl)benzene-1,2-diol + S-adenosyl-L-methionine = a 2-methoxy-6-(all-trans-polyprenyl)phenol + S-adenosyl-L-homocysteine + H(+). It functions in the pathway cofactor biosynthesis; ubiquinone biosynthesis. Functionally, O-methyltransferase that catalyzes the 2 O-methylation steps in the ubiquinone biosynthetic pathway. This Methylobacterium sp. (strain 4-46) protein is Ubiquinone biosynthesis O-methyltransferase.